The primary structure comprises 397 residues: MSGGINAGDSKLAFESSEHVKVATTFDAMGLKEDLLRGIYAYNFEKPSAIQQRAILPIIRGRDVIAQAQSGTGKTATFSISMLQSIDTTLRETQALVLSPTRELAIQIQSVVLALGDYLNVQCHACIGGTSVGEDIRKLDYGQHIVSGTPGRVYDMIRRRHLRTKNIKMLILDESDELLNMGFKDQIYDVYRYLPPSTQVVLLSATLPQDVLEMTSKFMTDPVRILVKRDELTLEGIKQFFVAVEKEEWKFDTLCDLYDTLTITQAVIFCNTRRKVDWLSAKMKENNFQVSSMHGEMQQKERDEVMAEFRQGSSRVLITTDVWARGIDIANISLVINYDLPTNRENYIHRIGRSGRFGRKGVAINFVTVDDVRTLRDIEQFYSTQIDEMPVKLEDML.

The short motif at 24–52 is the Q motif element; that stretch reads TTFDAMGLKEDLLRGIYAYNFEKPSAIQQ. The Helicase ATP-binding domain occupies 55–225; sequence ILPIIRGRDV…SKFMTDPVRI (171 aa). Position 68 to 75 (68 to 75) interacts with ATP; that stretch reads AQSGTGKT. The DEAD box motif lies at 173 to 176; that stretch reads DESD. The 162-residue stretch at 236 to 397 folds into the Helicase C-terminal domain; the sequence is GIKQFFVAVE…EMPVKLEDML (162 aa).

Belongs to the DEAD box helicase family. DDX48/FAL1 subfamily.

Its subcellular location is the nucleus. It is found in the nucleolus. The catalysed reaction is ATP + H2O = ADP + phosphate + H(+). In terms of biological role, ATP-dependent RNA helicase involved in 40S ribosomal subunit biogenesis. Required for the processing and cleavage of 35S pre-rRNA at sites A0, A1, and A2, leading to mature 18S rRNA. The chain is ATP-dependent RNA helicase FAL1 (FAL1) from Mycosarcoma maydis (Corn smut fungus).